Here is a 446-residue protein sequence, read N- to C-terminus: CBL-interacting protein kinase 8 (446 aa).

The Protein kinase domain maps to 13 to 266 (YEVGRTIGEG…IEEIRNDEWF (254 aa)). ATP is bound by residues 19 to 27 (IGEGTFAKV) and K42. Residue D136 is the Proton acceptor of the active site. The segment at 154–181 (DFGLSAWPAQGGALLRTTCGTPNYVAPE) is activation loop. The region spanning 301 to 329 (LDDEAGPLTLNAFDLIILSQGLNLAALFD) is the NAF domain. The PPI stretch occupies residues 336–365 (KLQNRFLSRKPAKVIMSSMEVVAQSMGYKT).

Belongs to the protein kinase superfamily. CAMK Ser/Thr protein kinase family. SNF1 subfamily. It depends on Mn(2+) as a cofactor.

It carries out the reaction L-seryl-[protein] + ATP = O-phospho-L-seryl-[protein] + ADP + H(+). The enzyme catalyses L-threonyl-[protein] + ATP = O-phospho-L-threonyl-[protein] + ADP + H(+). Its function is as follows. CIPK serine-threonine protein kinases interact with CBL proteins. Binding of a CBL protein to the regulatory NAF domain of CIPK protein lead to the activation of the kinase in a calcium-dependent manner. The protein is CBL-interacting protein kinase 8 (CIPK8) of Oryza sativa subsp. japonica (Rice).